The chain runs to 158 residues: DNA-binding transcriptional repressor RacR (158 aa).

In terms of assembly, homooctamer.

Transcriptional regulator that represses the expression of ydaS and ydaT under normal physiological conditions. It binds to its own upstream sequence and represses the adjacent and divergently coded ydaS-ydaT operon. RacR-mediated down-regulation of ydaS and ydaT may be critical for cell survival. RacR ensures that the prophage DNA is maintained in the genome. When the expression of the racR gene is reduced, the prophage Rac is excised from the genome, possibly to counteract the lethal toxicity of YdaT. The polypeptide is DNA-binding transcriptional repressor RacR (racR) (Escherichia coli (strain K12)).